Here is a 999-residue protein sequence, read N- to C-terminus: Protein Smaug (999 aa).

Residues Met1–Pro36 show a composition bias toward polar residues. Disordered stretches follow at residues Met1–Pro69 and Leu329–Pro349. Low complexity-rich tracts occupy residues Thr44–Pro69 and Leu329–Ser338. Residues Ser564 and Ser575 each carry the phosphoserine modification. The interval Glu583–Met763 is interaction with cup. The 55-residue stretch at Gly600 to Lys654 folds into the SAM domain. Disordered stretches follow at residues His773 to Met892 and Gln955 to Pro977. Polar residues-rich tracts occupy residues Lys801–Leu822 and His854–Pro864. Ser972 carries the phosphoserine modification.

Belongs to the SMAUG family. As to quaternary structure, interacts with oskar (osk). Binds to the 3'-UTR of nanos (nos). Interacts with cup, which in turn recruits eIF4-E, leading to an indirect interaction between smg and eIF4-E that prevents mRNA translation. Forms a complex with aub, twin, AGO3, nanos mRNA and piRNAs that targets the nanos 3'-untranslated region, in early embryos. In terms of tissue distribution, at syncytial blastoderm, it is located throughout the bulk cytoplasm and pole plasm. By the time of cellularization, it concentrates at the posterior pole.

The protein resides in the cytoplasm. Translation regulator that binds to the 3'-UTR of specific mRNAs such as nanos (nos) and prevents their translation. Prevents translation of unlocalized nanos in the bulk cytoplasm via the recruitment of cup. This is Protein Smaug (smg) from Drosophila melanogaster (Fruit fly).